The following is a 301-amino-acid chain: UDP-N-acetylenolpyruvoylglucosamine reductase (301 aa).

Positions 30–194 (VGGEADYLVF…LSVKFALAPG (165 aa)) constitute an FAD-binding PCMH-type domain. Residue Arg-173 is part of the active site. Residue Ser-223 is the Proton donor of the active site. The active site involves Glu-293.

Belongs to the MurB family. FAD is required as a cofactor.

Its subcellular location is the cytoplasm. The enzyme catalyses UDP-N-acetyl-alpha-D-muramate + NADP(+) = UDP-N-acetyl-3-O-(1-carboxyvinyl)-alpha-D-glucosamine + NADPH + H(+). Its pathway is cell wall biogenesis; peptidoglycan biosynthesis. Cell wall formation. The polypeptide is UDP-N-acetylenolpyruvoylglucosamine reductase (Streptococcus pneumoniae (strain Hungary19A-6)).